The chain runs to 689 residues: Elongation factor G (689 aa).

The tr-type G domain maps to 8–282; the sequence is ENTRNLGIMA…AVVDYLPSPL (275 aa). GTP contacts are provided by residues 17-24, 81-85, and 135-138; these read AHIDAGKT, DTPGH, and NKMD.

This sequence belongs to the TRAFAC class translation factor GTPase superfamily. Classic translation factor GTPase family. EF-G/EF-2 subfamily.

Its subcellular location is the cytoplasm. Catalyzes the GTP-dependent ribosomal translocation step during translation elongation. During this step, the ribosome changes from the pre-translocational (PRE) to the post-translocational (POST) state as the newly formed A-site-bound peptidyl-tRNA and P-site-bound deacylated tRNA move to the P and E sites, respectively. Catalyzes the coordinated movement of the two tRNA molecules, the mRNA and conformational changes in the ribosome. The sequence is that of Elongation factor G from Mesoplasma florum (strain ATCC 33453 / NBRC 100688 / NCTC 11704 / L1) (Acholeplasma florum).